The sequence spans 24 residues: Pandinin-2 (24 aa).

Homooligomer. Expressed by the venom gland.

Its subcellular location is the secreted. The protein localises to the target cell membrane. Its function is as follows. Disrupts cell membranes through formation of pores. Has strong antimicrobial activity against Gram-positive bacteria B.subtilis, S.epidermidis, E.faecalis and S.aureus. Is less active against Gram-negative bacteria P.aeruginosa and E.coli. Also increases efficacy of antibiotics (ampicillin, chloramphenicol, streptomycin, kanamycin, novobiocin) when tested against E.coli, probably by facilitating their incorporation into the bacteria. Possesses antifungal activity against C.albicans and hemolytic activity against human, sheep and pig erythrocytes. The chain is Pandinin-2 from Pandinus imperator (Emperor scorpion).